Reading from the N-terminus, the 609-residue chain is Dihydroxyacetone kinase (609 aa).

The 348-residue stretch at 8–355 (YKQDLVHAHL…LDYPTKVPGW (348 aa)) folds into the DhaK domain. Residues 53 to 56 (GSGH), K104, and D109 contribute to the substrate site. Catalysis depends on H232, which acts as the Tele-hemiaminal-histidine intermediate. The DhaL domain occupies 392-600 (STVKAVLESG…LAALVDGFAE (209 aa)). ATP is bound by residues 421–424 (DGDC), 467–468 (TS), 523–524 (TL), and 585–587 (DPG).

It belongs to the dihydroxyacetone kinase (DAK) family.

The catalysed reaction is dihydroxyacetone + ATP = dihydroxyacetone phosphate + ADP + H(+). The enzyme catalyses D-glyceraldehyde + ATP = D-glyceraldehyde 3-phosphate + ADP + H(+). It functions in the pathway polyol metabolism; glycerol fermentation; glycerone phosphate from glycerol (oxidative route): step 2/2. In terms of biological role, catalyzes both the phosphorylation of dihydroxyacetone and of glyceraldehyde. The polypeptide is Dihydroxyacetone kinase (DAK) (Pichia angusta (Yeast)).